The primary structure comprises 230 residues: ATP phosphoribosyltransferase (230 aa).

The protein belongs to the ATP phosphoribosyltransferase family. Short subfamily. As to quaternary structure, heteromultimer composed of HisG and HisZ subunits.

It localises to the cytoplasm. The enzyme catalyses 1-(5-phospho-beta-D-ribosyl)-ATP + diphosphate = 5-phospho-alpha-D-ribose 1-diphosphate + ATP. It functions in the pathway amino-acid biosynthesis; L-histidine biosynthesis; L-histidine from 5-phospho-alpha-D-ribose 1-diphosphate: step 1/9. In terms of biological role, catalyzes the condensation of ATP and 5-phosphoribose 1-diphosphate to form N'-(5'-phosphoribosyl)-ATP (PR-ATP). Has a crucial role in the pathway because the rate of histidine biosynthesis seems to be controlled primarily by regulation of HisG enzymatic activity. This Agrobacterium fabrum (strain C58 / ATCC 33970) (Agrobacterium tumefaciens (strain C58)) protein is ATP phosphoribosyltransferase.